The following is a 266-amino-acid chain: Hydroxyethylthiazole kinase (266 aa).

M43 lines the substrate pocket. R119 and T166 together coordinate ATP. Position 193 (G193) interacts with substrate.

Belongs to the Thz kinase family. Requires Mg(2+) as cofactor.

It carries out the reaction 5-(2-hydroxyethyl)-4-methylthiazole + ATP = 4-methyl-5-(2-phosphooxyethyl)-thiazole + ADP + H(+). It participates in cofactor biosynthesis; thiamine diphosphate biosynthesis; 4-methyl-5-(2-phosphoethyl)-thiazole from 5-(2-hydroxyethyl)-4-methylthiazole: step 1/1. Its function is as follows. Catalyzes the phosphorylation of the hydroxyl group of 4-methyl-5-beta-hydroxyethylthiazole (THZ). The sequence is that of Hydroxyethylthiazole kinase from Methanococcus vannielii (strain ATCC 35089 / DSM 1224 / JCM 13029 / OCM 148 / SB).